A 66-amino-acid polypeptide reads, in one-letter code: Large ribosomal subunit protein bL35 (66 aa).

Over residues 1–16 (MPKQKTHRASAKRFKR) the composition is skewed to basic residues. Positions 1–21 (MPKQKTHRASAKRFKRTGSGG) are disordered.

Belongs to the bacterial ribosomal protein bL35 family.

This Streptococcus mutans serotype c (strain ATCC 700610 / UA159) protein is Large ribosomal subunit protein bL35.